A 426-amino-acid chain; its full sequence is Lipoyl synthase, mitochondrial (426 aa).

Residues Met-1 to Tyr-29 constitute a mitochondrion transit peptide. Positions Arg-27–Gln-42 are enriched in polar residues. Positions Arg-27–Ser-61 are disordered. The segment covering Ser-43 to Lys-55 has biased composition (low complexity). Residues Cys-140, Cys-145, Cys-151, Cys-171, Cys-175, Cys-178, and Ser-388 each coordinate [4Fe-4S] cluster. The region spanning Gly-154–Leu-377 is the Radical SAM core domain.

Belongs to the radical SAM superfamily. Lipoyl synthase family. Requires [4Fe-4S] cluster as cofactor.

The protein localises to the mitochondrion. It catalyses the reaction [[Fe-S] cluster scaffold protein carrying a second [4Fe-4S](2+) cluster] + N(6)-octanoyl-L-lysyl-[protein] + 2 oxidized [2Fe-2S]-[ferredoxin] + 2 S-adenosyl-L-methionine + 4 H(+) = [[Fe-S] cluster scaffold protein] + N(6)-[(R)-dihydrolipoyl]-L-lysyl-[protein] + 4 Fe(3+) + 2 hydrogen sulfide + 2 5'-deoxyadenosine + 2 L-methionine + 2 reduced [2Fe-2S]-[ferredoxin]. It functions in the pathway protein modification; protein lipoylation via endogenous pathway; protein N(6)-(lipoyl)lysine from octanoyl-[acyl-carrier-protein]: step 2/2. Catalyzes the radical-mediated insertion of two sulfur atoms into the C-6 and C-8 positions of the octanoyl moiety bound to the lipoyl domains of lipoate-dependent enzymes, thereby converting the octanoylated domains into lipoylated derivatives. The sequence is that of Lipoyl synthase, mitochondrial from Podospora anserina (strain S / ATCC MYA-4624 / DSM 980 / FGSC 10383) (Pleurage anserina).